Here is a 361-residue protein sequence, read N- to C-terminus: 3-dehydroquinate synthase (361 aa).

NAD(+) is bound by residues 71-76 (DGEQNK), 105-109 (GVIGD), 129-130 (TT), Lys142, Lys151, and 169-172 (CLNT). Positions 184, 247, and 264 each coordinate Zn(2+).

This sequence belongs to the sugar phosphate cyclases superfamily. Dehydroquinate synthase family. The cofactor is Co(2+). Requires Zn(2+) as cofactor. NAD(+) serves as cofactor.

The protein localises to the cytoplasm. It catalyses the reaction 7-phospho-2-dehydro-3-deoxy-D-arabino-heptonate = 3-dehydroquinate + phosphate. It participates in metabolic intermediate biosynthesis; chorismate biosynthesis; chorismate from D-erythrose 4-phosphate and phosphoenolpyruvate: step 2/7. Functionally, catalyzes the conversion of 3-deoxy-D-arabino-heptulosonate 7-phosphate (DAHP) to dehydroquinate (DHQ). This Sodalis glossinidius (strain morsitans) protein is 3-dehydroquinate synthase.